Consider the following 367-residue polypeptide: Choline-phosphate cytidylyltransferase A (367 aa).

Met-1 carries the post-translational modification N-acetylmethionine. The tract at residues 1 to 33 (MDAQCSAKVNARKRRKEAPGPNGATEEDGVPSK) is disordered. Lys-8 is subject to N6-acetyllysine. CTP contacts are provided by Ile-84, Phe-85, His-92, and Lys-122. Residues Lys-122 and Trp-151 each coordinate phosphocholine. His-168, Asp-169, Tyr-173, Gln-195, Arg-196, Thr-197, and Ile-200 together coordinate CTP. Amphipathic stretches follow at residues 228-287 (KELN…EFIG) and 298-315 (ALKHMLKEGKGRMLQAIS). Ser-233 is modified (phosphoserine). The tract at residues 272–293 (IDLIQKWEEKSREFIGSFLEMF) is autoinhibitory (AI). The disordered stretch occupies residues 313–367 (AISPKQSPSSSPTRERSPSPSFRWPFSGKTSPPCSPANLSRHKAAAYDISEDEED). A phosphoserine mark is found at Ser-315, Ser-319, Ser-321, Ser-322, and Ser-323. Repeat 1 spans residues 319–324 (SPSSSP). The segment covering 319–339 (SPSSSPTRERSPSPSFRWPFS) has biased composition (low complexity). Thr-325 is subject to Phosphothreonine. Residues Ser-329, Ser-331, and Ser-333 each carry the phosphoserine modification. The 2; approximate repeat unit spans residues 329-333 (SPSPS). Thr-342 carries the post-translational modification Phosphothreonine. 4 positions are modified to phosphoserine: Ser-343, Ser-347, Ser-352, and Ser-362. Residues 343 to 348 (SPPCSP) form repeat 3.

Belongs to the cytidylyltransferase family. Homodimer. The serine residues of the C-terminus are phosphorylated. The inactive soluble form is stabilized by phosphorylation, the active membrane bound form is promoted by anionic lipids or diacylglycerol, and is stabilized by dephosphorylation. In terms of processing, monoubiquitinated by the SCF(FBXL2) complex, leading to proteasomal degradation. Brain, placenta, liver, fetal and adult lung.

The protein localises to the cytoplasm. The protein resides in the cytosol. It is found in the membrane. Its subcellular location is the endoplasmic reticulum membrane. It localises to the nucleus. It catalyses the reaction phosphocholine + CTP + H(+) = CDP-choline + diphosphate. Its pathway is phospholipid metabolism; phosphatidylcholine biosynthesis; phosphatidylcholine from phosphocholine: step 1/2. Interconverts between an inactive cytosolic form and an active membrane-bound form. Activation involves disruption of an inhibitory interaction between helices at the base of the active site and the autoinhibitory (AI) region. Activated by anionic lipid vesicles and by oleic acid or diacylglycerol-containing phosphatidylcholine vesicles. In terms of biological role, catalyzes the key rate-limiting step in the CDP-choline pathway for phosphatidylcholine biosynthesis. The chain is Choline-phosphate cytidylyltransferase A (PCYT1A) from Homo sapiens (Human).